A 940-amino-acid chain; its full sequence is UvrABC system protein A (940 aa).

31–38 provides a ligand contact to ATP; it reads GLSGSGKS. A C4-type zinc finger spans residues 252–279; the sequence is CPHCGYSMQELEPRLFSFNNPAGACGTC. ABC transporter domains are found at residues 309-586 and 606-936; these read WDQK…PDSL and RDKN…RFLK. Position 639–646 (639–646) interacts with ATP; that stretch reads GVSGSGKS. The segment at 739 to 765 adopts a C4-type zinc-finger fold; sequence CEACQGDGVIKVEMHFLPDVYVPCDVC.

Belongs to the ABC transporter superfamily. UvrA family. As to quaternary structure, forms a heterotetramer with UvrB during the search for lesions.

It is found in the cytoplasm. Functionally, the UvrABC repair system catalyzes the recognition and processing of DNA lesions. UvrA is an ATPase and a DNA-binding protein. A damage recognition complex composed of 2 UvrA and 2 UvrB subunits scans DNA for abnormalities. When the presence of a lesion has been verified by UvrB, the UvrA molecules dissociate. The protein is UvrABC system protein A of Vibrio vulnificus (strain YJ016).